An 84-amino-acid chain; its full sequence is Small ribosomal subunit protein uS17 (84 aa).

The protein belongs to the universal ribosomal protein uS17 family. As to quaternary structure, part of the 30S ribosomal subunit.

One of the primary rRNA binding proteins, it binds specifically to the 5'-end of 16S ribosomal RNA. The polypeptide is Small ribosomal subunit protein uS17 (Sodalis glossinidius (strain morsitans)).